We begin with the raw amino-acid sequence, 124 residues long: Fluoride-specific ion channel FluC (124 aa).

The next 4 helical transmembrane spans lie at Val5–Val25, Ser32–Met52, Phe67–Thr87, and Leu96–Ile116. Na(+)-binding residues include Gly75 and Thr78.

This sequence belongs to the fluoride channel Fluc/FEX (TC 1.A.43) family.

It localises to the cell inner membrane. The enzyme catalyses fluoride(in) = fluoride(out). Na(+) is not transported, but it plays an essential structural role and its presence is essential for fluoride channel function. In terms of biological role, fluoride-specific ion channel. Important for reducing fluoride concentration in the cell, thus reducing its toxicity. The sequence is that of Fluoride-specific ion channel FluC from Geobacter sp. (strain M21).